The chain runs to 503 residues: Protein-cysteine N-palmitoyltransferase HHAT-like protein (503 aa).

Helical transmembrane passes span leucine 12 to leucine 31, tryptophan 65 to alanine 87, tryptophan 100 to leucine 122, methionine 127 to leucine 149, alanine 250 to isoleucine 272, leucine 287 to valine 309, valine 426 to serine 445, and isoleucine 460 to valine 482.

Belongs to the membrane-bound acyltransferase family. HHAT subfamily. As to quaternary structure, interacts with SHH.

Its subcellular location is the endoplasmic reticulum membrane. Negatively regulates N-terminal palmitoylation of SHH by HHAT/SKN. This is Protein-cysteine N-palmitoyltransferase HHAT-like protein (Hhatl) from Mus musculus (Mouse).